Here is a 383-residue protein sequence, read N- to C-terminus: Delta(12) fatty acid desaturase FAD2 (383 aa).

Residues 1-29 form a disordered region; that stretch reads MGAGGRMQDPTNGGNKTEPEPIQRVPHEK. A compositionally biased stretch (basic and acidic residues) spans 17-29; the sequence is TEPEPIQRVPHEK. Helical transmembrane passes span 50 to 70 and 85 to 105; these read VIRSFSYVFYDLTIASILYYI and VAWPVYWAVQGCVLTGVWVIA. Positions 106 to 110 match the Histidine box-1 motif; the sequence is HECGH. A helical transmembrane segment spans residues 118–138; the sequence is WLDDTVGLVLHSFLLVPYFSW. A Histidine box-2 motif is present at residues 142 to 146; sequence HRRHH. 3 helical membrane passes run 180 to 200, 226 to 246, and 252 to 272; these read ILTLLVTLTLGWPLYLTFNVS, IFISDAGILAVVFVLFRLAMT, and VLTMYGGPLLVVNGFLVLITF. The short motif at 316-320 is the Histidine box-3 element; sequence HVAHH.

Belongs to the fatty acid desaturase type 1 family. Expressed in leaves, flower buds and developing seeds.

It is found in the membrane. It participates in lipid metabolism; polyunsaturated fatty acid biosynthesis. In terms of biological role, catalyzes the desaturation of oleic acid to linoleic acid. Introduces a double bond at position 12 of 16:1(9Z) and 18:1(9Z). This Calendula officinalis (Pot marigold) protein is Delta(12) fatty acid desaturase FAD2.